A 346-amino-acid polypeptide reads, in one-letter code: Arsenite methyltransferase (346 aa).

Belongs to the methyltransferase superfamily. Arsenite methyltransferase family.

It catalyses the reaction arsenic triglutathione + [thioredoxin]-dithiol + S-adenosyl-L-methionine + 2 H2O = methylarsonous acid + [thioredoxin]-disulfide + 3 glutathione + S-adenosyl-L-homocysteine + H(+). The enzyme catalyses arsenic triglutathione + 2 [thioredoxin]-dithiol + 2 S-adenosyl-L-methionine + H2O = dimethylarsinous acid + 2 [thioredoxin]-disulfide + 3 glutathione + 2 S-adenosyl-L-homocysteine + 2 H(+). It carries out the reaction arsenic triglutathione + 3 [thioredoxin]-dithiol + 3 S-adenosyl-L-methionine = trimethylarsine + 3 [thioredoxin]-disulfide + 3 glutathione + 3 S-adenosyl-L-homocysteine + 3 H(+). Its function is as follows. Catalyzes the transfer of a methyl group from AdoMet to arsenite, producing methylated arsenicals. Involved in the conversion of As(III) to dimethylarsenate as the main product in the medium and also produces dimethylarsine and trimethylarsine gases. Reduces the arsenic toxicity in the cell and may contribute to the global arsenic cycling. This chain is Arsenite methyltransferase, found in Aquipseudomonas alcaligenes (strain ATCC 14909 / DSM 50342 / CCUG 1425 / JCM 20561 / NBRC 14159 / NCIMB 9945 / NCTC 10367 / 1577) (Pseudomonas alcaligenes).